Here is a 399-residue protein sequence, read N- to C-terminus: Probable peptidoglycan glycosyltransferase FtsW (399 aa).

Residues 1–32 are Cytoplasmic-facing; that stretch reads MMAGFAQTTITKINQFYERWMPRLPAEMTARN. The helical transmembrane segment at 33-53 threads the bilayer; it reads VLVFCVVCLLCIGSVMVASAS. Residues 54 to 72 are Periplasmic-facing; it reads MPYAEYMHENPFHYVVRHA. Residues 73–93 traverse the membrane as a helical segment; that stretch reads ISIATAAIVAYLVYKVPLNVW. Residues 94 to 97 are Cytoplasmic-facing; the sequence is FKNT. A helical membrane pass occupies residues 98–118; sequence FSFWLITILLLLAVLVIGTEV. Residues 119–126 are Periplasmic-facing; the sequence is NGSRRWIR. A helical transmembrane segment spans residues 127 to 147; it reads LAGFTLQPTEVAKVMMAIFTA. At 148–159 the chain is on the cytoplasmic side; that stretch reads DYVVRRAKEVRT. The chain crosses the membrane as a helical span at residues 160–180; that stretch reads HWKGLVRLSGVMAITVGLIIA. Residues 181-183 lie on the Periplasmic side of the membrane; sequence EPD. Residues 184 to 204 form a helical membrane-spanning segment; the sequence is LGATVVIVLMMVGIFFLAGAP. At 205-207 the chain is on the cytoplasmic side; it reads PTQ. Residues 208 to 228 form a helical membrane-spanning segment; sequence FAIMLGAVVMGIGFLILFEPY. At 229 to 292 the chain is on the periplasmic side; it reads RLARAMSFTN…DFMLAVLGEE (64 aa). The chain crosses the membrane as a helical span at residues 293–313; it reads FGFVGISIVIGLSFIMLACCI. Residues 314–327 lie on the Cytoplasmic side of the membrane; it reads KIGHRALKHNFLRA. The helical transmembrane segment at 328 to 348 threads the bilayer; it reads GYLAYGISIIFLLQIIVNAGM. Over 349–359 the chain is Periplasmic; the sequence is NMGLMPTKGLT. A helical transmembrane segment spans residues 360–380; it reads LPFISYGGTSLMMCAAMISLI. Residues 381–399 are Cytoplasmic-facing; sequence LRIDASTQEINPDREESNF.

It belongs to the SEDS family. FtsW subfamily.

The protein resides in the cell inner membrane. It carries out the reaction [GlcNAc-(1-&gt;4)-Mur2Ac(oyl-L-Ala-gamma-D-Glu-L-Lys-D-Ala-D-Ala)](n)-di-trans,octa-cis-undecaprenyl diphosphate + beta-D-GlcNAc-(1-&gt;4)-Mur2Ac(oyl-L-Ala-gamma-D-Glu-L-Lys-D-Ala-D-Ala)-di-trans,octa-cis-undecaprenyl diphosphate = [GlcNAc-(1-&gt;4)-Mur2Ac(oyl-L-Ala-gamma-D-Glu-L-Lys-D-Ala-D-Ala)](n+1)-di-trans,octa-cis-undecaprenyl diphosphate + di-trans,octa-cis-undecaprenyl diphosphate + H(+). Its pathway is cell wall biogenesis; peptidoglycan biosynthesis. In terms of biological role, peptidoglycan polymerase that is essential for cell division. The protein is Probable peptidoglycan glycosyltransferase FtsW of Acinetobacter baylyi (strain ATCC 33305 / BD413 / ADP1).